The sequence spans 302 residues: Probable alpha-L-glutamate ligase (302 aa).

The region spanning 104 to 287 (LQLLSRKGVG…VAGLLIKFIE (184 aa)) is the ATP-grasp domain. ATP is bound by residues K141, 178–179 (EY), D187, and 211–213 (RSN). Positions 248, 260, and 262 each coordinate Mg(2+). Mn(2+) contacts are provided by D248, E260, and N262.

The protein belongs to the RimK family. Requires Mg(2+) as cofactor. Mn(2+) is required as a cofactor.

The sequence is that of Probable alpha-L-glutamate ligase from Alcanivorax borkumensis (strain ATCC 700651 / DSM 11573 / NCIMB 13689 / SK2).